A 187-amino-acid polypeptide reads, in one-letter code: Elongation factor P (187 aa).

Residue K34 is modified to N6-(3,6-diaminohexanoyl)-5-hydroxylysine.

The protein belongs to the elongation factor P family. May be beta-lysylated on the epsilon-amino group of Lys-34 by the combined action of EpmA and EpmB, and then hydroxylated on the C5 position of the same residue by EpmC (if this protein is present). Lysylation is critical for the stimulatory effect of EF-P on peptide-bond formation. The lysylation moiety may extend toward the peptidyltransferase center and stabilize the terminal 3-CCA end of the tRNA. Hydroxylation of the C5 position on Lys-34 may allow additional potential stabilizing hydrogen-bond interactions with the P-tRNA.

Its subcellular location is the cytoplasm. It functions in the pathway protein biosynthesis; polypeptide chain elongation. In terms of biological role, involved in peptide bond synthesis. Alleviates ribosome stalling that occurs when 3 or more consecutive Pro residues or the sequence PPG is present in a protein, possibly by augmenting the peptidyl transferase activity of the ribosome. Modification of Lys-34 is required for alleviation. In Buchnera aphidicola subsp. Schizaphis graminum (strain Sg), this protein is Elongation factor P.